The primary structure comprises 1320 residues: Inner centromere protein A (1320 aa).

Disordered stretches follow at residues 53-75 (KNSN…NNIS), 426-447 (QEKQ…QPVV), 611-679 (NEPI…VVPP), 701-877 (EEEE…NTAS), and 896-1215 (TKSP…DGDE). 3 stretches are compositionally biased toward low complexity: residues 54-75 (NSNY…NNIS), 429-447 (QQQQ…QPVV), and 615-640 (QQPS…SSSS). The stretch at 221–444 (QQNQFQEQHK…KQQEKQQQQQ (224 aa)) forms a coiled coil. Residues 653–668 (TIVTSKPTNKVQPQSL) are compositionally biased toward polar residues. Residues 669-679 (NSNINNNVVPP) are compositionally biased toward low complexity. Positions 683-855 (AAIANKLKKQ…QKKKTVQTIL (173 aa)) form a coiled coil. The span at 701 to 835 (EEEERLRKKQ…QEKEKQEKQK (135 aa)) shows a compositional bias: basic and acidic residues. Residues 851–863 (VQTILPTPQTPSR) are compositionally biased toward polar residues. Over residues 864 to 877 (SANNNYDDAANTAS) the composition is skewed to low complexity. Composition is skewed to acidic residues over residues 908 to 926 (DDQD…ENSE) and 934 to 951 (QDDS…DSDE). Residues 965 to 977 (NKNKNSNNSNNNN) show a composition bias toward low complexity. Residues 981–1000 (QSRKDKSIVFDSDSLNRNHN) show a composition bias toward basic and acidic residues. 2 stretches are compositionally biased toward low complexity: residues 1026–1040 (SNMK…YSNS) and 1047–1061 (SPPS…SSES). Polar residues predominate over residues 1062–1071 (NDCFSPLTPT). Residues 1072-1096 (NNNKINNNKINNNNSNNNSFNNSNS) are compositionally biased toward low complexity. The span at 1120 to 1136 (SKTSPFLTIRNTPSPLK) shows a compositional bias: polar residues. A compositionally biased stretch (low complexity) spans 1143-1154 (NMSSASSLSSFD). Over residues 1155 to 1170 (SDNDSDYNDNDIDDGE) the composition is skewed to acidic residues. The segment covering 1175–1187 (PNENFTTPLKNQE) has biased composition (polar residues). Low complexity predominate over residues 1188-1198 (NNNNNNSNNSN). Residues 1199–1209 (TQYPIITSPPS) show a composition bias toward polar residues.

Belongs to the INCENP family. Interacts with aurK.

Its subcellular location is the chromosome. It is found in the centromere. The protein localises to the cytoplasm. The protein resides in the cytoskeleton. It localises to the spindle. Its subcellular location is the nucleus. It is found in the cleavage furrow. Its function is as follows. Chromosomal passenger protein that seems to be required for chromosome segregation and the onset of cytokinesis during mitosis. Plays a key role in the abscission of daughter cells at the end of cytokinesis and in the establishment or maintenance of a bipolar spindle. The protein is Inner centromere protein A (icpA) of Dictyostelium discoideum (Social amoeba).